Consider the following 475-residue polypeptide: Aspartyl/glutamyl-tRNA(Asn/Gln) amidotransferase subunit B (475 aa).

This sequence belongs to the GatB/GatE family. GatB subfamily. In terms of assembly, heterotrimer of A, B and C subunits.

It carries out the reaction L-glutamyl-tRNA(Gln) + L-glutamine + ATP + H2O = L-glutaminyl-tRNA(Gln) + L-glutamate + ADP + phosphate + H(+). It catalyses the reaction L-aspartyl-tRNA(Asn) + L-glutamine + ATP + H2O = L-asparaginyl-tRNA(Asn) + L-glutamate + ADP + phosphate + 2 H(+). In terms of biological role, allows the formation of correctly charged Asn-tRNA(Asn) or Gln-tRNA(Gln) through the transamidation of misacylated Asp-tRNA(Asn) or Glu-tRNA(Gln) in organisms which lack either or both of asparaginyl-tRNA or glutaminyl-tRNA synthetases. The reaction takes place in the presence of glutamine and ATP through an activated phospho-Asp-tRNA(Asn) or phospho-Glu-tRNA(Gln). The chain is Aspartyl/glutamyl-tRNA(Asn/Gln) amidotransferase subunit B from Staphylococcus aureus (strain MRSA252).